We begin with the raw amino-acid sequence, 274 residues long: ATP synthase subunit a (274 aa).

A run of 5 helical transmembrane segments spans residues 43-63 (TLNI…LFVF), 103-123 (VIAP…MMDL), 149-169 (DVSI…FYSI), 223-243 (LIFI…LSLP), and 245-265 (AIFH…LTIV).

It belongs to the ATPase A chain family. As to quaternary structure, F-type ATPases have 2 components, CF(1) - the catalytic core - and CF(0) - the membrane proton channel. CF(1) has five subunits: alpha(3), beta(3), gamma(1), delta(1), epsilon(1). CF(0) has three main subunits: a(1), b(2) and c(9-12). The alpha and beta chains form an alternating ring which encloses part of the gamma chain. CF(1) is attached to CF(0) by a central stalk formed by the gamma and epsilon chains, while a peripheral stalk is formed by the delta and b chains.

The protein resides in the cell inner membrane. Its function is as follows. Key component of the proton channel; it plays a direct role in the translocation of protons across the membrane. The chain is ATP synthase subunit a from Yersinia enterocolitica serotype O:8 / biotype 1B (strain NCTC 13174 / 8081).